The following is a 568-amino-acid chain: MASSCAVQVKLELGHRAQVRKKPTVEGFTHDWMVFVRGPEHSNIQHFVEKVVFHLHESFPRPKRVCKDPPYKVEESGYAGFILPIEVYFKNKEEPRKVRFDYDLFLHLEGHPPVNHLRCEKLTFNNPTEDFRRKLLKAGGDPNRSIHTSSSSSSSSSSSSSSSSSSSSSSSSSSSSSSSSSSSSSSSSSSTSFSKPHKLMKEHKEKPSKDSREHKSAFKEPSRDHNKSSKESSKKPKENKPLKEEKIVPKMAFKEPKPMSKEPKPDSNLLTITSGQDKKAPSKRPPISDSEELSAKKRKKSSSEALFKSFSSAPPLILTCSADKKQIKDKSHVKMGKVKIESETSEKKKSTLPPFDDIVDPNDSDVEENISSKSDSEQPSPASSSSSSSSSFTPSQTRQQGPLRSIMKDLHSDDNEEESDEVEDNDNDSEMERPVNRGGSRSRRVSLSDGSDSESSSASSPLHHEPPPPLLKTNNNQILEVKSPIKQSKSDKQIKNGECDKAYLDELVELHRRLMTLRERHILQQIVNLIEETGHFHITNTTFDFDLCSLDKTTVRKLQSYLETSGTS.

A YEATS domain is found at 1 to 138 (MASSCAVQVK…EDFRRKLLKA (138 aa)). Histone H3K9cr binding stretches follow at residues 78–80 (YAG) and 106–108 (LHL). Positions 138–475 (AGGDPNRSIH…PPPPLLKTNN (338 aa)) are disordered. The span at 149–190 (SSSSSSSSSSSSSSSSSSSSSSSSSSSSSSSSSSSSSSSSSS) shows a compositional bias: low complexity. A compositionally biased stretch (basic and acidic residues) spans 202–265 (EHKEKPSKDS…PKPMSKEPKP (64 aa)). Ser288 and Ser294 each carry phosphoserine. A Nuclear localization signal motif is present at residues 295-300 (AKKRKK). Residues 303–313 (SEALFKSFSSA) show a composition bias toward low complexity. Basic and acidic residues predominate over residues 322-349 (ADKKQIKDKSHVKMGKVKIESETSEKKK). Lys339 is covalently cross-linked (Glycyl lysine isopeptide (Lys-Gly) (interchain with G-Cter in SUMO2)). Acidic residues predominate over residues 357-368 (DIVDPNDSDVEE). The segment covering 371-395 (SSKSDSEQPSPASSSSSSSSSFTPS) has biased composition (low complexity). Phosphoserine occurs at positions 412 and 419. Over residues 414-429 (DNEEESDEVEDNDNDS) the composition is skewed to acidic residues. The segment covering 445 to 461 (VSLSDGSDSESSSASSP) has biased composition (low complexity). The residue at position 483 (Ser483) is a Phosphoserine.

Component of the super elongation complex (SEC), at least composed of EAF1, EAF2, CDK9, MLLT3/AF9, AFF (AFF1 or AFF4), the P-TEFb complex and ELL (ELL, ELL2 or ELL3). Interacts with BCOR. Interacts with CBX8. Interacts with ALKBH4. Enriched in undifferentiated hematopoietic stem cells in fetal liver, cord blood and bone marrow.

It localises to the nucleus. The protein localises to the chromosome. With respect to regulation, crotonylated lysine binding is strongly inhibited by the peptide XL-07i, carrying a 2-furancarbonyl side chain and capped with a hydrophobic carboxybenzyl group. XL-07i targets the unique pi-pi-pi stacking interaction at the crotonylation recognition site. Its function is as follows. Chromatin reader component of the super elongation complex (SEC), a complex required to increase the catalytic rate of RNA polymerase II transcription by suppressing transient pausing by the polymerase at multiple sites along the DNA. Specifically recognizes and binds acylated histone H3, with a preference for histone H3 that is crotonylated. Crotonylation marks active promoters and enhancers and confers resistance to transcriptional repressors. Recognizes and binds histone H3 crotonylated at 'Lys-9' (H3K9cr), and with slightly lower affinity histone H3 crotonylated at 'Lys-18' (H3K18cr). Also recognizes and binds histone H3 acetylated and butyrylated at 'Lys-9' (H3K9ac and H3K9bu, respectively), but with lower affinity than crotonylated histone H3. In the SEC complex, MLLT3 is required to recruit the complex to crotonylated histones. Recruitment of the SEC complex to crotonylated histones promotes recruitment of DOT1L on active chromatin to deposit histone H3 'Lys-79' methylation (H3K79me). Plays a key role in hematopoietic stem cell (HSC) maintenance by preserving, rather than conferring, HSC stemness. Acts by binding to the transcription start site of active genes in HSCs and sustaining level of H3K79me2, probably by recruiting DOT1L. The sequence is that of Protein AF-9 from Homo sapiens (Human).